The sequence spans 276 residues: Rhomboid protease GlpG (276 aa).

A run of 6 helical transmembrane segments spans residues 94-114, 142-162, 169-189, 192-212, 229-249, and 250-270; these read GPVT…MSLI, IFMH…WYLG, LGSG…GYVQ, FSGP…GYVW, LIIF…GMSM, and ANGA…VDTL. Ser201 serves as the catalytic Nucleophile. The active site involves His254.

Belongs to the peptidase S54 family.

Its subcellular location is the cell inner membrane. The catalysed reaction is Cleaves type-1 transmembrane domains using a catalytic dyad composed of serine and histidine that are contributed by different transmembrane domains.. Functionally, rhomboid-type serine protease that catalyzes intramembrane proteolysis. This is Rhomboid protease GlpG from Salmonella typhi.